A 289-amino-acid chain; its full sequence is Shikimate dehydrogenase (NADP(+)) (289 aa).

Shikimate is bound by residues 20–22 and serine 67; that span reads SIS. The active-site Proton acceptor is the lysine 71. Shikimate is bound by residues asparagine 92 and aspartate 107. Residues 132 to 136 and valine 230 each bind NADP(+); that span reads GGGGA. Tyrosine 232 is a shikimate binding site. Glycine 253 provides a ligand contact to NADP(+).

The protein belongs to the shikimate dehydrogenase family. In terms of assembly, homodimer.

It catalyses the reaction shikimate + NADP(+) = 3-dehydroshikimate + NADPH + H(+). It participates in metabolic intermediate biosynthesis; chorismate biosynthesis; chorismate from D-erythrose 4-phosphate and phosphoenolpyruvate: step 4/7. In terms of biological role, involved in the biosynthesis of the chorismate, which leads to the biosynthesis of aromatic amino acids. Catalyzes the reversible NADPH linked reduction of 3-dehydroshikimate (DHSA) to yield shikimate (SA). The polypeptide is Shikimate dehydrogenase (NADP(+)) (Streptococcus mutans serotype c (strain ATCC 700610 / UA159)).